The chain runs to 329 residues: Type 2 lactosamine alpha-2,3-sialyltransferase (329 aa).

The Cytoplasmic segment spans residues 1–4 (MKGY). Residues 5–25 (LVAIFLSSIFLYYVLYCILWG) traverse the membrane as a helical; Signal-anchor for type II membrane protein segment. The Lumenal segment spans residues 26 to 329 (TNGYWFPAEE…IKKKMVINLT (304 aa)). 4 N-linked (GlcNAc...) asparagine glycosylation sites follow: N129, N181, N295, and N308.

It belongs to the glycosyltransferase 29 family.

Its subcellular location is the golgi apparatus membrane. It carries out the reaction a neolactoside nLc4Cer(d18:1(4E)) + CMP-N-acetyl-beta-neuraminate = a neolactoside IV(3)-alpha-NeuAc-nLc4Cer(d18:1(4E)) + CMP + H(+). It catalyses the reaction a beta-D-galactosyl-(1-&gt;4)-N-acetyl-beta-D-glucosaminyl derivative + CMP-N-acetyl-beta-neuraminate = an N-acetyl-alpha-neuraminyl-(2-&gt;3)-beta-D-galactosyl-(1-&gt;4)-N-acetyl-beta-D-glucosaminyl derivative + CMP + H(+). The catalysed reaction is a neolactoside nLc6Cer(d18:1(4E)) + CMP-N-acetyl-beta-neuraminate = a neolactoside VI(3)-alpha-NeuNAc-nLc6Cer(d18:1(4E)) + CMP + H(+). Functionally, transfers the sialyl residue from CMP-N-acetyl-beta-neuraminate to the terminal galactose residue on sugar chains of glycoproteins and glycolipids. It's alpha-2,3-sialyltransferase activity is specific toward type II glycan chains (Galbeta1-4GlcNAc) on glycoproteins and glycolipids such as neolactosides nLc4Cer and nLc6Cer, whose sialyl-products serve as precursors for the Lewis X antigen. Critically involved in the synthesis of functional selectin ligands needed for neutrophil recruitment during inflammation and lymphocyte homing to the lymph nodes. The sequence is that of Type 2 lactosamine alpha-2,3-sialyltransferase (St3gal6) from Mus musculus (Mouse).